Consider the following 59-residue polypeptide: Potassium channel toxin alpha-KTx 1.1 (59 aa).

The N-terminal stretch at 1 to 22 (MKILSVLLLALIICSIVGWSEA) is a signal peptide. Position 23 is a pyrrolidone carboxylic acid (glutamine 23). Intrachain disulfides connect cysteine 29–cysteine 50, cysteine 35–cysteine 55, and cysteine 39–cysteine 57. Positions 48–55 (GKCMNKKC) are interaction with Ca(2+)-activated K(+) channels.

This sequence belongs to the short scorpion toxin superfamily. Potassium channel inhibitor family. Alpha-KTx 01 subfamily. As to expression, expressed by the venom gland.

It is found in the secreted. Its function is as follows. This toxin inhibits numerous potassium channels: shaker (Ki=227 nM), Kv1.2/KCNA2 (nanomolar range), Kv1.3/KCNA3 (nanomolar range), Kv1.5/KCNA5 (Kd&gt;100 nM), Kv1.6/KCNA6 (Ki=22 nM), KCa1.1/KCNMA1 (IC(50)=5.9 nM). It blocks channel activity by a simple bimolecular inhibition process. It also shows a weak interaction with nicotinic acetylcholine receptors (nAChR), suggesting it may weakly inhibit it. It also exhibits pH-specific antimicrobial activities against bacteria (B.subtilis, E.coli and S.aureus) and the fungus C.albicans. This Leiurus hebraeus (Hebrew deathstalker scorpion) protein is Potassium channel toxin alpha-KTx 1.1.